The chain runs to 409 residues: ATPase ASNA1 homolog (409 aa).

21–28 (KGGVGKTT) contributes to the ATP binding site. Residue aspartate 62 is part of the active site. Residues glutamate 303 and asparagine 330 each coordinate ATP. Zn(2+) contacts are provided by cysteine 342 and cysteine 345.

This sequence belongs to the arsA ATPase family. Homodimer.

The protein localises to the cytoplasm. It localises to the endoplasmic reticulum. Its function is as follows. ATPase required for the post-translational delivery of tail-anchored (TA) proteins to the endoplasmic reticulum. Recognizes and selectively binds the transmembrane domain of TA proteins in the cytosol. This complex then targets to the endoplasmic reticulum by membrane-bound receptors, where the tail-anchored protein is released for insertion. This process is regulated by ATP binding and hydrolysis. ATP binding drives the homodimer towards the closed dimer state, facilitating recognition of newly synthesized TA membrane proteins. ATP hydrolysis is required for insertion. Subsequently, the homodimer reverts towards the open dimer state, lowering its affinity for the membrane-bound receptor, and returning it to the cytosol to initiate a new round of targeting. The chain is ATPase ASNA1 homolog from Leishmania infantum.